The following is a 772-amino-acid chain: Rho guanine nucleotide exchange factor 6 (772 aa).

The Calponin-homology (CH) domain maps to 1–111 (MNPEERVVTW…TLLAVNKATE (111 aa)). Positions 115–158 (SERPCGRSSSLSATTSSQTNPQAAVPSTTPEQQSEEKAAEMTEN) are disordered. Positions 122 to 133 (SSSLSATTSSQT) are enriched in low complexity. Ser-126 carries the post-translational modification Phosphoserine. Thr-133 carries the post-translational modification Phosphothreonine. The segment covering 134-146 (NPQAAVPSTTPEQ) has biased composition (polar residues). The 60-residue stretch at 160-219 (SHQLIVKARFNFKQTNEDELSVCKGDIIYVTRVEEGGWWEGTLNGRTGWFPSNYVREIKP) folds into the SH3 domain. Ser-225 carries the phosphoserine modification. Residues 241 to 421 (YYTVVLQNIL…KSLMGQCQDL (181 aa)) enclose the DH domain. The PH domain maps to 443-548 (DIKTLGNVIF…WMEQLNRLTK (106 aa)). Ser-488 bears the Phosphoserine mark. The segment covering 557 to 573 (SKTSSSSCSTHSSFSST) has biased composition (low complexity). The segment at 557 to 581 (SKTSSSSCSTHSSFSSTGQPRGPLE) is disordered. 2 positions are modified to phosphoserine: Ser-640 and Ser-680.

As to quaternary structure, interacts with PAK kinases through the SH3 domain. Interacts with GIT1. Interacts with PARVB. Component of cytoplasmic complexes, which also contain PXN, GIT1 and PAK1. Interacts with BIN2. Identified in a complex with BIN2 and GIT2. Interacts with PARVG; the guanine nucleotide exchange factor activity of ARHGEF6 is essential for PARVG-induced enhancement of cell spreading.

The protein resides in the cell projection. The protein localises to the lamellipodium. In terms of biological role, acts as a RAC1 guanine nucleotide exchange factor (GEF). The chain is Rho guanine nucleotide exchange factor 6 (Arhgef6) from Rattus norvegicus (Rat).